The primary structure comprises 627 residues: Siderophore iron transporter ARN1 (627 aa).

Residues 1-70 are Extracellular-facing; that stretch reads MESVHSRDPV…TEIIGSAYNK (70 aa). The helical transmembrane segment at 71-91 threads the bilayer; sequence WYLQAILLLSAFICGYGYGLD. At 92–110 the chain is on the cytoplasmic side; the sequence is GNIRYIYTGYATSSYSEHS. The helical transmembrane segment at 111–131 threads the bilayer; it reads LLSTINVINAVVSAASQIIYA. Residues 132 to 135 are Extracellular-facing; the sequence is RLSD. Residues 136–156 traverse the membrane as a helical segment; the sequence is VFGRLYLFISAVILYVVGTII. The Cytoplasmic portion of the chain corresponds to 157-167; the sequence is QSQAYDVQRYA. A helical membrane pass occupies residues 168–188; the sequence is AGAIFYNAGYVGVILILLIIL. Residues 189-197 are Extracellular-facing; the sequence is SDFSSLKWR. A helical membrane pass occupies residues 198 to 218; the sequence is LLYQFVPTWPFIINTWIAGNI. Topologically, residues 219 to 231 are cytoplasmic; that stretch reads TSRANPVVNWSWD. A helical membrane pass occupies residues 232–252; it reads VGMWAFIFPLSCVPIVLCMLH. Residues 253–290 lie on the Extracellular side of the membrane; sequence MQWRARKTPEWHALKGQKSYYQEHGFIKILKQLFWMLD. A helical transmembrane segment spans residues 291–311; that stretch reads VVGVLLMGCSLGCILVPLTLA. Residues 312 to 323 lie on the Cytoplasmic side of the membrane; sequence GGVKTTWNDSRL. The chain crosses the membrane as a helical span at residues 324-344; that stretch reads IGPFVLGFVLIPILWIWEYRF. Topologically, residues 345-367 are extracellular; that stretch reads ARDPILPYRLVKDRAVWSSMGIS. Residues 368 to 388 traverse the membrane as a helical segment; that stretch reads FLIDFIYYMAADYLYTVMIVA. The Cytoplasmic portion of the chain corresponds to 389–398; that stretch reads VNESVKSATR. Residues 399–419 form a helical membrane-spanning segment; the sequence is IATLSSFVSTVASPFFALLVT. At 420–424 the chain is on the extracellular side; the sequence is RCTRL. The chain crosses the membrane as a helical span at residues 425 to 445; it reads KPFIMFGCALWMVAMGLLYHF. Over 446 to 454 the chain is Cytoplasmic; that stretch reads RGGSQSHSG. The chain crosses the membrane as a helical span at residues 455–475; sequence IIGALCVWGVGTTLFTYPVTV. The Extracellular segment spans residues 476–563; that stretch reads SVQSAVSHEN…LMNAYKYVQR (88 aa). The chain crosses the membrane as a helical span at residues 564 to 584; it reads LETIVALVFCVPLIAFSLCLR. The Cytoplasmic portion of the chain corresponds to 585–627; the sequence is DPKLTDTVAVEYIEDGEYVDTKDNDPILDWFEKLPSKFTFKRE.

The protein belongs to the major facilitator superfamily.

Its subcellular location is the cell membrane. The protein resides in the endosome membrane. Functionally, involved in the transport of siderophore ferrichrome and so has a role in iron homeostasis. The protein is Siderophore iron transporter ARN1 (ARN1) of Saccharomyces cerevisiae (strain ATCC 204508 / S288c) (Baker's yeast).